A 426-amino-acid chain; its full sequence is Enolase (426 aa).

Gln163 is a (2R)-2-phosphoglycerate binding site. Glu205 (proton donor) is an active-site residue. Asp242, Glu286, and Asp313 together coordinate Mg(2+). The (2R)-2-phosphoglycerate site is built by Lys338, Arg367, Ser368, and Lys389. The Proton acceptor role is filled by Lys338.

Belongs to the enolase family. Mg(2+) is required as a cofactor.

The protein localises to the cytoplasm. It is found in the secreted. Its subcellular location is the cell surface. The enzyme catalyses (2R)-2-phosphoglycerate = phosphoenolpyruvate + H2O. It participates in carbohydrate degradation; glycolysis; pyruvate from D-glyceraldehyde 3-phosphate: step 4/5. Its function is as follows. Catalyzes the reversible conversion of 2-phosphoglycerate (2-PG) into phosphoenolpyruvate (PEP). It is essential for the degradation of carbohydrates via glycolysis. The chain is Enolase from Helicobacter pylori (strain HPAG1).